Reading from the N-terminus, the 94-residue chain is RxLR effector protein PITG_15972 (94 aa).

An N-terminal signal peptide occupies residues 1-21 (MRAVYILAMACAATLQASSSA). Residues 50–65 (RLLRVEDKEEETEEER) carry the RxLR-dEER motif.

The protein belongs to the RxLR effector family.

The protein localises to the secreted. The protein resides in the host cytoplasm. It is found in the host nucleus. In terms of biological role, effector that enhances P.infestans colonization of Nicotiana benthamiana leaves. The polypeptide is RxLR effector protein PITG_15972 (Phytophthora infestans (strain T30-4) (Potato late blight agent)).